The chain runs to 262 residues: MIFVLDVGNTNAVLGVFEEGELRQHWRMETDRHKTEDEYGMLVKQLLDHEGLSFEDVKGIIVSSVVPPIMFALERMCEKYFKIKPLVVGPGIKTGLNIKYENPREVGADRIVNAVAGIQLYGSPLIIVDFGTATTYCYINEEKHYMGGVITPGIMISAEALYSRAAKLPRIEITKPSSVVGKNTVSAMQSGILYGYVGQVEGIVKRMKEEAKQEPKVIATGGLAKLISEESNVIDIVDPFLTLKGLYMLYERNANLQQEKGE.

ATP is bound at residue 6-13 (DVGNTNAV). Substrate contacts are provided by residues Tyr100 and 107–110 (GADR). Asp109 functions as the Proton acceptor in the catalytic mechanism. Asp129 provides a ligand contact to K(+). Residue Thr132 coordinates ATP. Thr184 is a substrate binding site.

It belongs to the type III pantothenate kinase family. In terms of assembly, homodimer. The cofactor is NH4(+). Requires K(+) as cofactor.

Its subcellular location is the cytoplasm. The enzyme catalyses (R)-pantothenate + ATP = (R)-4'-phosphopantothenate + ADP + H(+). The protein operates within cofactor biosynthesis; coenzyme A biosynthesis; CoA from (R)-pantothenate: step 1/5. Catalyzes the phosphorylation of pantothenate (Pan), the first step in CoA biosynthesis. The sequence is that of Type III pantothenate kinase from Bacillus cereus (strain G9842).